Consider the following 25-residue polypeptide: YDASLKPNLQIPQKNIPNNDAVNIK.

The segment at 1–25 is disordered; sequence YDASLKPNLQIPQKNIPNNDAVNIK. Residues 10-25 show a composition bias toward polar residues; that stretch reads QIPQKNIPNNDAVNIK.

It catalyses the reaction Endohydrolysis of (1-&gt;4)-beta-D-glucosidic linkages in cellulose, lichenin and cereal beta-D-glucans.. This enzyme hydrolyzes cellotetraose, cellopentaose, and cellohexaose to cellobiose and cellotriose but does not hydrolyze cellobiose or cellotriose. This chain is Endoglucanase 1, found in Ruminiclostridium josui (Clostridium josui).